The chain runs to 543 residues: Formin-binding protein 1-like (543 aa).

The F-BAR domain maps to 1 to 263 (MSWGTELWDQ…AAKSVDERRD (263 aa)). Coiled coils occupy residues 66-258 (FTSC…AKSV) and 334-426 (LEDF…QRSE). Residues 339–416 (HLPPEQRRKR…IHKNEGWLSE (78 aa)) form the REM-1 domain. Positions 424 to 467 (RSERRHSAEANHLVAQGRESPEGSYTEDANQEGRVQPQHHAHPE) are disordered. The 62-residue stretch at 479–540 (PAIGHCKSLY…PTSYIEITLE (62 aa)) folds into the SH3 domain.

Belongs to the FNBP1 family. In terms of assembly, homodimerizes, the dimers can polymerize end-to-end to form filamentous structures. Interacts with GTP-bound cdc42 and wasl/n-wasp.

Its subcellular location is the cytoplasm. The protein localises to the cytoskeleton. It is found in the cell cortex. It localises to the cytoplasmic vesicle. The protein resides in the cell membrane. Functionally, required to coordinate membrane tubulation with reorganization of the actin cytoskeleton during endocytosis. Essential for autophagy of intracellular bacterial pathogens. Promotes cdc42-induced actin polymerization by activating the wasl-waspip complex, the predominant form of wasl/n-wasp in cells. The protein is Formin-binding protein 1-like (fnbp1l) of Xenopus laevis (African clawed frog).